A 969-amino-acid polypeptide reads, in one-letter code: Endogenous retrovirus group K member 11 Pol protein (969 aa).

One can recognise a Reverse transcriptase domain in the interval leucine 57–isoleucine 245. The LPQG motif lies at leucine 161–glycine 164. The 131-residue stretch at leucine 460 to isoleucine 590 folds into the RNase H type-1 domain. Mg(2+) contacts are provided by aspartate 469, glutamate 497, aspartate 517, and aspartate 582. An Integrase-type zinc finger spans residues serine 587 to glutamine 628. Positions 596, 600, 624, and 627 each coordinate Zn(2+). The 162-residue stretch at arginine 642 to lysine 803 folds into the Integrase catalytic domain. A DNA-binding region (integrase-type) is located at residues lysine 811 to glutamate 859.

It belongs to the beta type-B retroviral polymerase family. HERV class-II K(HML-2) pol subfamily.

It catalyses the reaction DNA(n) + a 2'-deoxyribonucleoside 5'-triphosphate = DNA(n+1) + diphosphate. The catalysed reaction is Endonucleolytic cleavage to 5'-phosphomonoester.. Its function is as follows. Early post-infection, the reverse transcriptase converts the viral RNA genome into double-stranded viral DNA. The RNase H domain of the reverse transcriptase performs two functions. It degrades the RNA template and specifically removes the RNA primer from the RNA/DNA hybrid. Following nuclear import, the integrase catalyzes the insertion of the linear, double-stranded viral DNA into the host cell chromosome. Endogenous Pol proteins may have kept, lost or modified their original function during evolution. The polypeptide is Endogenous retrovirus group K member 11 Pol protein (ERVK-11) (Homo sapiens (Human)).